Here is a 251-residue protein sequence, read N- to C-terminus: Probable transcriptional regulatory protein SYNPCC7002_A0851 (251 aa).

The region spanning 20–141 is the Response regulatory domain; that stretch reads RILVVEDEAV…ELVARCRALL (122 aa). Asp76 bears the 4-aspartylphosphate mark. The ompR/PhoB-type DNA-binding region spans 153 to 251; it reads NSVRQFKDIS…TVRGFGYRFG (99 aa).

In terms of processing, phosphorylation.

The protein is Probable transcriptional regulatory protein SYNPCC7002_A0851 of Picosynechococcus sp. (strain ATCC 27264 / PCC 7002 / PR-6) (Agmenellum quadruplicatum).